We begin with the raw amino-acid sequence, 428 residues long: UPF0761 membrane protein Ppha_1623 (428 aa).

6 consecutive transmembrane segments (helical) span residues 52–72, 108–128, 148–168, 189–209, 216–233, and 252–272; these read LLSIVPILAVILSILNVFVVF, SVPILGGVFLFIIALFLISTV, FTLYWTVLTLGPVLIGSSLAA, LLSFFPFINSVAAFFLLYMLV, FVHAFSGALLAALLFELS, and GALSVIPMLFFWVYLGWIVVL.

It belongs to the UPF0761 family.

Its subcellular location is the cell inner membrane. This Pelodictyon phaeoclathratiforme (strain DSM 5477 / BU-1) protein is UPF0761 membrane protein Ppha_1623.